A 265-amino-acid chain; its full sequence is Glutamate racemase (265 aa).

Residues Asp-12 to Ser-13 and Tyr-44 to Gly-45 contribute to the substrate site. Cys-75 serves as the catalytic Proton donor/acceptor. Asn-76 to Thr-77 contacts substrate. Cys-186 (proton donor/acceptor) is an active-site residue. Thr-187–His-188 is a substrate binding site.

It belongs to the aspartate/glutamate racemases family.

The catalysed reaction is L-glutamate = D-glutamate. It functions in the pathway cell wall biogenesis; peptidoglycan biosynthesis. In terms of biological role, provides the (R)-glutamate required for cell wall biosynthesis. The sequence is that of Glutamate racemase from Pseudomonas aeruginosa (strain UCBPP-PA14).